We begin with the raw amino-acid sequence, 492 residues long: Protein nucleotidyltransferase YdiU (492 aa).

8 residues coordinate ATP: G91, G93, R94, K114, D126, G127, R177, and R184. Residue D253 is the Proton acceptor of the active site. Residues N254 and D263 each coordinate Mg(2+). Position 263 (D263) interacts with ATP.

This sequence belongs to the SELO family. Requires Mg(2+) as cofactor. The cofactor is Mn(2+).

It catalyses the reaction L-seryl-[protein] + ATP = 3-O-(5'-adenylyl)-L-seryl-[protein] + diphosphate. The enzyme catalyses L-threonyl-[protein] + ATP = 3-O-(5'-adenylyl)-L-threonyl-[protein] + diphosphate. It carries out the reaction L-tyrosyl-[protein] + ATP = O-(5'-adenylyl)-L-tyrosyl-[protein] + diphosphate. The catalysed reaction is L-histidyl-[protein] + UTP = N(tele)-(5'-uridylyl)-L-histidyl-[protein] + diphosphate. It catalyses the reaction L-seryl-[protein] + UTP = O-(5'-uridylyl)-L-seryl-[protein] + diphosphate. The enzyme catalyses L-tyrosyl-[protein] + UTP = O-(5'-uridylyl)-L-tyrosyl-[protein] + diphosphate. Nucleotidyltransferase involved in the post-translational modification of proteins. It can catalyze the addition of adenosine monophosphate (AMP) or uridine monophosphate (UMP) to a protein, resulting in modifications known as AMPylation and UMPylation. The polypeptide is Protein nucleotidyltransferase YdiU (Maridesulfovibrio salexigens (strain ATCC 14822 / DSM 2638 / NCIMB 8403 / VKM B-1763) (Desulfovibrio salexigens)).